An 81-amino-acid chain; its full sequence is EC protein III (81 aa).

The protein belongs to the metallothionein superfamily. Type 15 family.

In terms of biological role, binds 5 molecules of zinc. May have a role in Zn(2+) homeostasis during embryogenesis. The chain is EC protein III from Triticum aestivum (Wheat).